The chain runs to 112 residues: Protein FAM32A (112 aa).

Residues 15 to 35 (KGCGDMSLGKKKKKKNKANDQ) are disordered.

This sequence belongs to the FAM32 family.

It localises to the nucleus. In terms of biological role, may induce G2 arrest and apoptosis. May also increase cell sensitivity to apoptotic stimuli. The polypeptide is Protein FAM32A (fam32a) (Xenopus tropicalis (Western clawed frog)).